Reading from the N-terminus, the 176-residue chain is ATP-dependent protease subunit HslV (176 aa).

Thr2 is an active-site residue. Na(+) contacts are provided by Gly157, Cys160, and Thr163.

The protein belongs to the peptidase T1B family. HslV subfamily. A double ring-shaped homohexamer of HslV is capped on each side by a ring-shaped HslU homohexamer. The assembly of the HslU/HslV complex is dependent on binding of ATP.

The protein localises to the cytoplasm. The enzyme catalyses ATP-dependent cleavage of peptide bonds with broad specificity.. Allosterically activated by HslU binding. Protease subunit of a proteasome-like degradation complex believed to be a general protein degrading machinery. This Pectobacterium carotovorum subsp. carotovorum (strain PC1) protein is ATP-dependent protease subunit HslV.